Reading from the N-terminus, the 388-residue chain is Processive diacylglycerol beta-glucosyltransferase (388 aa).

The protein belongs to the glycosyltransferase 28 family. UgtP subfamily.

It localises to the cell membrane. The enzyme catalyses a 1,2-diacyl-3-O-(beta-D-glucopyranosyl)-sn-glycerol + UDP-alpha-D-glucose = a 1,2-diacyl-3-O-(beta-D-Glc-(1-&gt;6)-beta-D-Glc)-sn-glycerol + UDP + H(+). It catalyses the reaction a 1,2-diacyl-3-O-(beta-D-Glc-(1-&gt;6)-beta-D-Glc)-sn-glycerol + UDP-alpha-D-glucose = a 1,2-diacyl-3-O-(beta-D-Glc-(1-&gt;6)-beta-D-Glc-(1-&gt;6)-beta-D-Glc)-sn-glycerol + UDP + H(+). It carries out the reaction a 1,2-diacyl-sn-glycerol + UDP-alpha-D-glucose = a 1,2-diacyl-3-O-(beta-D-glucopyranosyl)-sn-glycerol + UDP + H(+). The protein operates within glycolipid metabolism; diglucosyl-diacylglycerol biosynthesis. Functionally, processive glucosyltransferase involved in the biosynthesis of both the bilayer- and non-bilayer-forming membrane glucolipids. Is able to successively transfer up to three glucosyl residues to diacylglycerol (DAG), thereby catalyzing the formation of beta-monoglucosyl-DAG (3-O-(beta-D-glucopyranosyl)-1,2-diacyl-sn-glycerol), beta-diglucosyl-DAG (3-O-(beta-D-glucopyranosyl-beta-(1-&gt;6)-D-glucopyranosyl)-1,2-diacyl-sn-glycerol) and beta-triglucosyl-DAG (3-O-(beta-D-glucopyranosyl-beta-(1-&gt;6)-D-glucopyranosyl-beta-(1-&gt;6)-D-glucopyranosyl)-1,2-diacyl-sn-glycerol). Beta-diglucosyl-DAG is the predominant glycolipid found in Bacillales and is also used as a membrane anchor for lipoteichoic acid (LTA). The polypeptide is Processive diacylglycerol beta-glucosyltransferase (Bacillus mycoides (strain KBAB4) (Bacillus weihenstephanensis)).